The chain runs to 152 residues: Nucleoside diphosphate kinase A (152 aa).

4 residues coordinate ATP: K12, F60, R88, and T94. K100 participates in a covalent cross-link: Glycyl lysine isopeptide (Lys-Gly) (interchain with G-Cter in ubiquitin). ATP contacts are provided by R105 and N115. Catalysis depends on H118, which acts as the Pros-phosphohistidine intermediate. Phosphoserine occurs at positions 120, 122, and 125.

Belongs to the NDK family. In terms of assembly, hexamer of two different chains: An and B (A6, A5B, A4B2, A3B3, A2B4, AB5, B6). Interacts with PRUNE1. Component of the SET complex, composed of at least ANP32A, APEX1, HMGB2, NME1, SET and TREX1. Within this complex, interacts directly with SET. Also interacts with TREX1, but only following translocation to the nucleus. The cofactor is Mg(2+). Isoform 1 is expressed in heart, brain, placenta, lung, liver, skeletal muscle, pancreas, spleen and thymus. Expressed in lung carcinoma cell lines but not in normal lung tissues. Isoform 2 is ubiquitously expressed and its expression is also related to tumor differentiation.

The protein resides in the cytoplasm. It is found in the nucleus. The enzyme catalyses a 2'-deoxyribonucleoside 5'-diphosphate + ATP = a 2'-deoxyribonucleoside 5'-triphosphate + ADP. It catalyses the reaction a ribonucleoside 5'-diphosphate + ATP = a ribonucleoside 5'-triphosphate + ADP. Autophosphorylation at His-118 increases serine/threonine protein kinase activity of the enzyme. Interaction with the SET complex inhibits the endonuclease activity. Its function is as follows. Major role in the synthesis of nucleoside triphosphates other than ATP. The ATP gamma phosphate is transferred to the NDP beta phosphate via a ping-pong mechanism, using a phosphorylated active-site intermediate. Possesses nucleoside-diphosphate kinase, serine/threonine-specific protein kinase, geranyl and farnesyl pyrophosphate kinase, histidine protein kinase and 3'-5' exonuclease activities. Involved in cell proliferation, differentiation and development, signal transduction, G protein-coupled receptor endocytosis, and gene expression. Required for neural development including neural patterning and cell fate determination. During GZMA-mediated cell death, works in concert with TREX1. NME1 nicks one strand of DNA and TREX1 removes bases from the free 3' end to enhance DNA damage and prevent DNA end reannealing and rapid repair. This is Nucleoside diphosphate kinase A (NME1) from Homo sapiens (Human).